We begin with the raw amino-acid sequence, 99 residues long: Aspartyl/glutamyl-tRNA(Asn/Gln) amidotransferase subunit C (99 aa).

Belongs to the GatC family. As to quaternary structure, heterotrimer of A, B and C subunits.

It carries out the reaction L-glutamyl-tRNA(Gln) + L-glutamine + ATP + H2O = L-glutaminyl-tRNA(Gln) + L-glutamate + ADP + phosphate + H(+). The catalysed reaction is L-aspartyl-tRNA(Asn) + L-glutamine + ATP + H2O = L-asparaginyl-tRNA(Asn) + L-glutamate + ADP + phosphate + 2 H(+). Functionally, allows the formation of correctly charged Asn-tRNA(Asn) or Gln-tRNA(Gln) through the transamidation of misacylated Asp-tRNA(Asn) or Glu-tRNA(Gln) in organisms which lack either or both of asparaginyl-tRNA or glutaminyl-tRNA synthetases. The reaction takes place in the presence of glutamine and ATP through an activated phospho-Asp-tRNA(Asn) or phospho-Glu-tRNA(Gln). The sequence is that of Aspartyl/glutamyl-tRNA(Asn/Gln) amidotransferase subunit C from Sulfurihydrogenibium sp. (strain YO3AOP1).